Consider the following 487-residue polypeptide: DEAD-box ATP-dependent RNA helicase CshA (487 aa).

A Q motif motif is present at residues 3-31 (ITFQDFQLSSDLTKAIKRMGFEEATPIQA). The 171-residue stretch at 34-204 (IPLGLANKDV…ERFMTNPEHV (171 aa)) folds into the Helicase ATP-binding domain. 47–54 (AQTGTGKT) lines the ATP pocket. The DEAD box signature appears at 152-155 (DEAD). Residues 215 to 375 (NIQQFYLEVH…RMKAPTLDEA (161 aa)) form the Helicase C-terminal domain. Positions 428–440 (DNTPVRLTEEAPL) are enriched in basic and acidic residues. Residues 428–487 (DNTPVRLTEEAPLRTKRNKNHHHRSSKRRDGGGYRGKNNRSSYDKKRSSNDRRQKKSYNS) are disordered. A compositionally biased stretch (basic residues) spans 441 to 454 (RTKRNKNHHHRSSK). Residues 469–479 (SYDKKRSSNDR) are compositionally biased toward basic and acidic residues.

It belongs to the DEAD box helicase family. CshA subfamily. As to quaternary structure, oligomerizes, may be a member of the RNA degradosome.

It is found in the cytoplasm. The enzyme catalyses ATP + H2O = ADP + phosphate + H(+). In terms of biological role, DEAD-box RNA helicase possibly involved in RNA degradation. Unwinds dsRNA in both 5'- and 3'-directions, has RNA-dependent ATPase activity. This chain is DEAD-box ATP-dependent RNA helicase CshA, found in Bacillus licheniformis (strain ATCC 14580 / DSM 13 / JCM 2505 / CCUG 7422 / NBRC 12200 / NCIMB 9375 / NCTC 10341 / NRRL NRS-1264 / Gibson 46).